The sequence spans 384 residues: F-box only protein 5-B (384 aa).

Disordered stretches follow at residues 1-20 (MMCG…KSSA) and 79-106 (DEEN…ETDS). Residues 9-19 (PSPKKLLSKSS) are compositionally biased toward low complexity. Polar residues predominate over residues 83–99 (SSLQDSGYSSILQNDSP). Residues 191 to 238 (AELFHRDFKHLLTKILRHLNAMDLINVIGVSTTWRKILQKDNWAYNTY) form the F-box domain. The ZBR-type zinc finger occupies 311–359 (SLKACVDCGSPAKYDSYLHRAICTRESCKLDFCTLCSCKYHSSKSCLIS). The Zn(2+) site is built by Cys-315, Cys-318, Cys-333, Cys-338, Cys-343, Cys-346, His-351, and Cys-356.

As to quaternary structure, part of a SCF (SKP1-cullin-F-box) protein ligase complex. Interacts with btrc. Interacts with skp1. Interacts with cdc20. Interacts with pin1; stabilizes fbxo5 by preventing its association with btrc in an isomerization-dependent pathway; this interaction is present during G2 phase and prevents fbxo5 degradation. Interacts with plk1. In terms of processing, proteolysed; proteolysis is induced by both cyclin B-cdk1 and cyclin A-cdk1/2 complex through probable phosphorylation. Proteolysis is inhibited by pin1 during G2.

Its subcellular location is the nucleus. The protein resides in the cytoplasm. The protein localises to the cytoskeleton. It localises to the spindle. It is found in the microtubule organizing center. Its subcellular location is the centrosome. Its pathway is protein modification; protein ubiquitination. In terms of biological role, regulates progression through early mitosis by inhibiting the anaphase promoting complex/cyclosome (APC). Binds to the APC activators cdc20 to prevent APC activation. Can also bind directly to the APC to inhibit substrate-binding. Required to arrest unfertilized eggs at metaphase of meiosis II, by preventing their release from metaphase of meiosis II, through inhibition of APC-dependent cyclin B destruction leading to stabilization of cyclin B-cdk1 complex activity. This chain is F-box only protein 5-B (fbxo5-b), found in Xenopus laevis (African clawed frog).